Consider the following 1555-residue polypeptide: Phospholipid-transporting ATPase DNF1 (1555 aa).

The interval 1-85 is disordered; the sequence is MAPPQEEGGG…SSNNGGSAPR (85 aa). The Cytoplasmic segment spans residues 1 to 134; sequence MAPPQEEGGG…PKNLWFQFHN (134 aa). Residues 22-37 are compositionally biased toward basic residues; sequence WATRRLTVKSGARKRL. Residues 72–82 are compositionally biased toward low complexity; sequence GSISSSNNGGS. The helical transmembrane segment at 135–155 threads the bilayer; that stretch reads IANIFFLFLVILVIFPIFGGV. A topological domain (extracellular) is located at residue Asn156. The helical transmembrane segment at 157–177 threads the bilayer; sequence PGLNSVPLIVIITVTAIKDAI. Topologically, residues 178 to 491 are cytoplasmic; that stretch reads EDYRRTILDI…ARIARELNFN (314 aa). The disordered stretch occupies residues 257–288; it reads TRTAPWDPSHRRSVASHTEEIQMTPVPSPVPH. The chain crosses the membrane as a helical span at residues 492–512; the sequence is VICNFGILLIMCLIAAIANGI. Residues 513–537 are Extracellular-facing; sequence AWGKTDASLAWFEYGSIGGTPALTG. The helical transmembrane segment at 538–558 threads the bilayer; sequence FITFWAAVIVFQNLVPISLYI. The Cytoplasmic segment spans residues 559–1123; it reads SLEIVRTLQA…TISNFFYKNM (565 aa). The active-site 4-aspartylphosphate intermediate is the Asp606. Residues Asp606, Lys607, Thr608, Glu740, Phe781, Ser783, Lys786, Lys804, Arg839, Thr840, Thr919, Gly920, Asp921, Arg1031, and Lys1037 each coordinate ATP. Asp606 is a binding site for Mg(2+). Thr608 is a Mg(2+) binding site. Asp1057 lines the Mg(2+) pocket. Positions 1060 and 1061 each coordinate ATP. Asp1061 provides a ligand contact to Mg(2+). A helical transmembrane segment spans residues 1124 to 1144; the sequence is IWTWSIFWYQCYCNFDIAYIF. The Extracellular portion of the chain corresponds to 1145–1146; sequence EY. The helical transmembrane segment at 1147–1167 threads the bilayer; the sequence is TYILMFNLFFTSVPVILMGVL. Residues 1168-1200 lie on the Cytoplasmic side of the membrane; sequence DQDVSDTVSLAVPQLYRRGIERKEWTQTKFWLY. Residues 1201–1221 form a helical membrane-spanning segment; sequence MIDGVYQSVMSFFIPFIFVVL. Over 1222–1237 the chain is Extracellular; sequence TPTAAGNGLDVSERTR. A helical membrane pass occupies residues 1238–1258; sequence LGAYIAHPAVITINGYILINT. The Cytoplasmic portion of the chain corresponds to 1259-1262; sequence YRWD. Residues 1263-1283 traverse the membrane as a helical segment; that stretch reads WLMLLSIVLSDVFIFFWTGVY. At 1284-1302 the chain is on the extracellular side; sequence TATTYSAGFYQAAPQVYQE. A helical membrane pass occupies residues 1303 to 1323; the sequence is LTFWMCLIVTPALCLLPRLVV. Arg1320 contacts a 1,2-diacyl-sn-glycero-3-phospho-L-serine. Residues 1324–1555 lie on the Cytoplasmic side of the membrane; sequence KCIQKQRFPY…EGEPPREPPM (232 aa). Disordered regions lie at residues 1364-1456 and 1489-1555; these read VEGE…ERTR and ESTH…EPPM. Positions 1406 to 1432 are enriched in polar residues; sequence ATHNTRAQNGSDGTTYIMQSRTSTELQ. 2 stretches are compositionally biased toward basic and acidic residues: residues 1436 to 1456 and 1540 to 1555; these read PFDR…ERTR and KSID…EPPM.

This sequence belongs to the cation transport ATPase (P-type) (TC 3.A.3) family. Type IV subfamily. Component of a flippase complex consisting of DNF1 and CDC50. Interacts with CDC50; the interaction is direct. It depends on Mg(2+) as a cofactor.

It localises to the cell membrane. Its subcellular location is the endosome membrane. It is found in the golgi apparatus. The protein resides in the trans-Golgi network membrane. The catalysed reaction is ATP + H2O + phospholipidSide 1 = ADP + phosphate + phospholipidSide 2.. It catalyses the reaction a 1,2-diacyl-sn-glycero-3-phosphoethanolamine(out) + ATP + H2O = a 1,2-diacyl-sn-glycero-3-phosphoethanolamine(in) + ADP + phosphate + H(+). It carries out the reaction a 1,2-diacyl-sn-glycero-3-phosphocholine(out) + ATP + H2O = a 1,2-diacyl-sn-glycero-3-phosphocholine(in) + ADP + phosphate + H(+). The enzyme catalyses a beta-D-glucosyl-(1&lt;-&gt;1')-N-acylsphing-4-enine(out) + ATP + H2O = a beta-D-glucosyl-(1&lt;-&gt;1')-N-acylsphing-4-enine(in) + ADP + phosphate + H(+). The catalysed reaction is a 1,2-diacyl-sn-glycero-3-phospho-L-serine(out) + ATP + H2O = a 1,2-diacyl-sn-glycero-3-phospho-L-serine(in) + ADP + phosphate + H(+). In terms of biological role, catalytic component of a P4-ATPase flippase complex which catalyzes the hydrolysis of ATP coupled to the transport of phosphatidylcholine and phosphatidylserine from the lumenal to the cytosolic leaflet of membranes and ensures the maintenance of asymmetric distribution of phospholipids. May also transport glucosylceramide and phosphatidylethanolamine. This is Phospholipid-transporting ATPase DNF1 from Chaetomium thermophilum (strain DSM 1495 / CBS 144.50 / IMI 039719) (Thermochaetoides thermophila).